A 520-amino-acid chain; its full sequence is Glycosyl hydrolase family 109 protein 5 (520 aa).

Positions 1-27 are cleaved as a signal peptide; the sequence is MRTFKSLMISLCMGTTLCMCLPQTTTA. NAD(+) contacts are provided by residues 77–78, Asp99, 147–150, 167–168, and Asn196; these read MR, WLHH, and EV. Substrate contacts are provided by residues Tyr225, Arg248, 260–263, and Tyr338; that span reads YATH. Tyr260 is an NAD(+) binding site.

The protein belongs to the Gfo/Idh/MocA family. Glycosyl hydrolase 109 subfamily. It depends on NAD(+) as a cofactor.

Glycosidase. The chain is Glycosyl hydrolase family 109 protein 5 from Phocaeicola vulgatus (strain ATCC 8482 / DSM 1447 / JCM 5826 / CCUG 4940 / NBRC 14291 / NCTC 11154) (Bacteroides vulgatus).